We begin with the raw amino-acid sequence, 464 residues long: Soluble pyridine nucleotide transhydrogenase (464 aa).

35–44 (DSRREVGGNC) is an FAD binding site.

This sequence belongs to the class-I pyridine nucleotide-disulfide oxidoreductase family. FAD is required as a cofactor.

It localises to the cytoplasm. It carries out the reaction NAD(+) + NADPH = NADH + NADP(+). In terms of biological role, conversion of NADPH, generated by peripheral catabolic pathways, to NADH, which can enter the respiratory chain for energy generation. The sequence is that of Soluble pyridine nucleotide transhydrogenase from Pseudomonas syringae pv. tomato (strain ATCC BAA-871 / DC3000).